We begin with the raw amino-acid sequence, 551 residues long: Arginine--tRNA ligase (551 aa).

Residues A123–R133 carry the 'HIGH' region motif.

Belongs to the class-I aminoacyl-tRNA synthetase family. In terms of assembly, monomer.

The protein resides in the cytoplasm. It catalyses the reaction tRNA(Arg) + L-arginine + ATP = L-arginyl-tRNA(Arg) + AMP + diphosphate. This chain is Arginine--tRNA ligase, found in Chlorobium limicola (strain DSM 245 / NBRC 103803 / 6330).